A 348-amino-acid chain; its full sequence is Sesquiterpene synthase MGU_11447 (348 aa).

The Mg(2+) site is built by D91 and D96. Positions 91–96 match the DDXXXD motif motif; that stretch reads DDLFVD. R184 is a binding site for substrate. N230, S234, and E238 together coordinate Mg(2+).

This sequence belongs to the terpene synthase family. Mg(2+) serves as cofactor.

It carries out the reaction (2E,6E)-farnesyl diphosphate + H2O = (+)-corvol ether B + diphosphate. The catalysed reaction is (2E,6E)-farnesyl diphosphate + H2O = (+)-corvol ether A + diphosphate. Its function is as follows. Terpene synthase that catalyzes the conversion of (2E,6E)-farnesyl diphosphate (FPP) into sesquiterpenes which are important for fungi-environment interactions. Produces a mixture consisting of 8 sesquiterpenes including corvol ethers A and B, as well as traces of epizonarene, gamma-cadinene, delta-cadinene, alpha-cadinene, alpha-cadinol, and an unidentified sesquiterpene. Produces both corvol ether A and corvol ether B in similar concentrations. This Metarhizium guizhouense (strain ARSEF 977) protein is Sesquiterpene synthase MGU_11447.